Here is a 477-residue protein sequence, read N- to C-terminus: Glycogen synthase (477 aa).

An ADP-alpha-D-glucose-binding site is contributed by lysine 15.

The protein belongs to the glycosyltransferase 1 family. Bacterial/plant glycogen synthase subfamily.

It carries out the reaction [(1-&gt;4)-alpha-D-glucosyl](n) + ADP-alpha-D-glucose = [(1-&gt;4)-alpha-D-glucosyl](n+1) + ADP + H(+). It participates in glycan biosynthesis; glycogen biosynthesis. Synthesizes alpha-1,4-glucan chains using ADP-glucose. The protein is Glycogen synthase of Salmonella arizonae (strain ATCC BAA-731 / CDC346-86 / RSK2980).